The sequence spans 863 residues: Ubiquitin carboxyl-terminal hydrolase 13 (863 aa).

Ser-114 is subject to Phosphoserine; by AURKB. Thr-122 is subject to Phosphothreonine. Residues 187 to 295 (PVSKYANNLT…KHLAHFGIDM (109 aa)) form a UBP-type; degenerate zinc finger. Zn(2+)-binding residues include Cys-211, Cys-214, Cys-231, and His-244. Residue Lys-311 forms a Glycyl lysine isopeptide (Lys-Gly) (interchain with G-Cter in SUMO2) linkage. A USP domain is found at 336-861 (TGLKNLGNSC…LGYMYFYRRI (526 aa)). The active-site Nucleophile is Cys-345. Lys-405 participates in a covalent cross-link: Glycyl lysine isopeptide (Lys-Gly) (interchain with G-Cter in SUMO2). UBA domains are found at residues 652 to 693 (DIDE…IIVH) and 727 to 767 (QPPE…IFSH). Catalysis depends on His-823, which acts as the Proton acceptor.

It belongs to the peptidase C19 family. Interacts with UFD1. Interacts (via UBA domains) with SIAH2 (when ubiquitinated). Interacts with BAG6; the interaction is direct and may mediate UBL4A deubiquitination. Interacts (via UBA 2 domain) with AMFR; the interaction is direct. Interacts with UBL4A; may be indirect via BAG6. Interacts with NEDD4. In terms of processing, phosphorylated by AURKB at Ser-114; leading to stabilization of cell cycle proteins such as SKP2 and AURKB, but not MCL1. In terms of tissue distribution, highly expressed in ovary and testes.

Its subcellular location is the cytoplasm. It carries out the reaction Thiol-dependent hydrolysis of ester, thioester, amide, peptide and isopeptide bonds formed by the C-terminal Gly of ubiquitin (a 76-residue protein attached to proteins as an intracellular targeting signal).. Its activity is regulated as follows. Specifically inhibited by spautin-1 (specific and potent autophagy inhibitor-1), a derivative of MBCQ that binds to USP13 and inhibits deubiquitinase activity. Regulated by PIK3C3/VPS34-containing complexes. The weak deubiquitinase activity in vitro suggests the existence of some mechanism that activates the enzyme. Functionally, deubiquitinase that mediates deubiquitination of target proteins such as BECN1, MITF, SKP2 and USP10 and is involved in various processes such as autophagy, endoplasmic reticulum-associated degradation (ERAD), cell cycle progression or DNA damage response. Component of a regulatory loop that controls autophagy and p53/TP53 levels: mediates deubiquitination of BECN1, a key regulator of autophagy, leading to stabilize the PIK3C3/VPS34-containing complexes. Alternatively, forms with NEDD4 a deubiquitination complex, which subsequently stabilizes VPS34 to promote autophagy. Also deubiquitinates USP10, an essential regulator of p53/TP53 stability. In turn, PIK3C3/VPS34-containing complexes regulate USP13 stability, suggesting the existence of a regulatory system by which PIK3C3/VPS34-containing complexes regulate p53/TP53 protein levels via USP10 and USP13. Recruited by nuclear UFD1 and mediates deubiquitination of SKP2, thereby regulating endoplasmic reticulum-associated degradation (ERAD). Also regulates ERAD through the deubiquitination of UBL4A a component of the BAG6/BAT3 complex. Mediates stabilization of SIAH2 independently of deubiquitinase activity: binds ubiquitinated SIAH2 and acts by impairing SIAH2 autoubiquitination. Regulates the cell cycle progression by stabilizing cell cycle proteins such as SKP2 and AURKB. In addition, plays an important role in maintaining genomic stability and in DNA replication checkpoint activation via regulation of RAP80 and TOPBP1. Deubiquitinates the multifunctional protein HMGB1 and subsequently drives its nucleocytoplasmic localization and its secretion. Positively regulates type I and type II interferon signalings by deubiquitinating STAT1 but negatively regulates antiviral response by deubiquitinating STING1. In Homo sapiens (Human), this protein is Ubiquitin carboxyl-terminal hydrolase 13 (USP13).